The chain runs to 335 residues: Cut9-interacting protein scn1 (335 aa).

It belongs to the metallo-dependent hydrolases superfamily.

In terms of biological role, interacts with cut9. This is Cut9-interacting protein scn1 (scn1) from Schizosaccharomyces pombe (strain 972 / ATCC 24843) (Fission yeast).